The primary structure comprises 285 residues: Bifunctional protein FolD (285 aa).

NADP(+) is bound by residues 166 to 168 (GAS) and Ile232.

Belongs to the tetrahydrofolate dehydrogenase/cyclohydrolase family. Homodimer.

It catalyses the reaction (6R)-5,10-methylene-5,6,7,8-tetrahydrofolate + NADP(+) = (6R)-5,10-methenyltetrahydrofolate + NADPH. It carries out the reaction (6R)-5,10-methenyltetrahydrofolate + H2O = (6R)-10-formyltetrahydrofolate + H(+). Its pathway is one-carbon metabolism; tetrahydrofolate interconversion. Functionally, catalyzes the oxidation of 5,10-methylenetetrahydrofolate to 5,10-methenyltetrahydrofolate and then the hydrolysis of 5,10-methenyltetrahydrofolate to 10-formyltetrahydrofolate. The polypeptide is Bifunctional protein FolD (Buchnera aphidicola subsp. Schizaphis graminum (strain Sg)).